The primary structure comprises 150 residues: Troponin C, isoform 1 (150 aa).

At Met1 the chain carries N-acetylmethionine. EF-hand domains follow at residues Asp7–Lys42, Ile43–Glu78, Ala83–Lys118, and Leu119–Gly150. Residues Asp56, Asp58, Ser60, Glu62, and Glu67 each contribute to the Ca(2+) site. The Ca(2+) site is built by Asp132, Asp134, Ser136, Thr138, and Glu143.

The protein belongs to the troponin C family.

In terms of biological role, troponin is the central regulatory protein of striated muscle contraction. Tn consists of three components: Tn-I which is the inhibitor of actomyosin ATPase, Tn-T which contains the binding site for tropomyosin and Tn-C. The binding of calcium to Tn-C abolishes the inhibitory action of Tn on actin filaments. The polypeptide is Troponin C, isoform 1 (Homarus americanus (American lobster)).